Here is a 398-residue protein sequence, read N- to C-terminus: Acetate kinase (398 aa).

Asn-9 provides a ligand contact to Mg(2+). Lys-16 serves as a coordination point for ATP. Arg-90 provides a ligand contact to substrate. Asp-147 (proton donor/acceptor) is an active-site residue. ATP-binding positions include 207–211 (HIGNG), 282–284 (DLR), and 330–334 (GVGEN). Glu-384 contacts Mg(2+).

Belongs to the acetokinase family. In terms of assembly, homodimer. Mg(2+) serves as cofactor. Mn(2+) is required as a cofactor.

It localises to the cytoplasm. It catalyses the reaction acetate + ATP = acetyl phosphate + ADP. Its pathway is metabolic intermediate biosynthesis; acetyl-CoA biosynthesis; acetyl-CoA from acetate: step 1/2. In terms of biological role, catalyzes the formation of acetyl phosphate from acetate and ATP. Can also catalyze the reverse reaction. This is Acetate kinase from Staphylococcus haemolyticus (strain JCSC1435).